Consider the following 355-residue polypeptide: uncharacterized protein (355 aa).

Residues 1–27 (MESPIRTARRTLPLLIGATCLVLALTG) form the signal peptide. Cysteine 28 carries the N-palmitoyl cysteine lipid modification. Cysteine 28 carries S-diacylglycerol cysteine lipidation. Positions 33–53 (GPAQARPTPSASTSPKQAPAL) are disordered. Residues 39 to 48 (PTPSASTSPK) show a composition bias toward polar residues.

It is found in the cell membrane. This is an uncharacterized protein from Streptomyces coelicolor (strain ATCC BAA-471 / A3(2) / M145).